A 597-amino-acid polypeptide reads, in one-letter code: Elongation factor 4 (597 aa).

The tr-type G domain maps to Lys-2–Thr-184. GTP-binding positions include Asp-14–Thr-19 and Asn-131–Asp-134.

Belongs to the TRAFAC class translation factor GTPase superfamily. Classic translation factor GTPase family. LepA subfamily.

Its subcellular location is the cell inner membrane. The enzyme catalyses GTP + H2O = GDP + phosphate + H(+). Functionally, required for accurate and efficient protein synthesis under certain stress conditions. May act as a fidelity factor of the translation reaction, by catalyzing a one-codon backward translocation of tRNAs on improperly translocated ribosomes. Back-translocation proceeds from a post-translocation (POST) complex to a pre-translocation (PRE) complex, thus giving elongation factor G a second chance to translocate the tRNAs correctly. Binds to ribosomes in a GTP-dependent manner. The protein is Elongation factor 4 of Neisseria gonorrhoeae (strain ATCC 700825 / FA 1090).